The chain runs to 92 residues: UPF0250 protein VC0395_A0469/VC395_0960 (92 aa).

It belongs to the UPF0250 family.

This chain is UPF0250 protein VC0395_A0469/VC395_0960, found in Vibrio cholerae serotype O1 (strain ATCC 39541 / Classical Ogawa 395 / O395).